A 46-amino-acid chain; its full sequence is Esculentin-1SEb (46 aa).

Residues C40 and C46 are joined by a disulfide bond.

As to expression, expressed by the skin glands.

The protein localises to the secreted. Mast cell degranulating peptide. Causes histamine release from rat peritoneal mast cells in vitro. Has antibacterial activity against the Gram-negative bacterium E.coli K12 and Gram-positive bacterium M.luteus NCT C2665. The polypeptide is Esculentin-1SEb (Lithobates sevosus (Dusky gopher frog)).